The primary structure comprises 394 residues: Phosphopentomutase (394 aa).

Positions 10, 282, 287, 323, 324, and 335 each coordinate Mn(2+).

It belongs to the phosphopentomutase family. It depends on Mn(2+) as a cofactor.

The protein localises to the cytoplasm. The enzyme catalyses 2-deoxy-alpha-D-ribose 1-phosphate = 2-deoxy-D-ribose 5-phosphate. It catalyses the reaction alpha-D-ribose 1-phosphate = D-ribose 5-phosphate. The protein operates within carbohydrate degradation; 2-deoxy-D-ribose 1-phosphate degradation; D-glyceraldehyde 3-phosphate and acetaldehyde from 2-deoxy-alpha-D-ribose 1-phosphate: step 1/2. Isomerase that catalyzes the conversion of deoxy-ribose 1-phosphate (dRib-1-P) and ribose 1-phosphate (Rib-1-P) to deoxy-ribose 5-phosphate (dRib-5-P) and ribose 5-phosphate (Rib-5-P), respectively. The chain is Phosphopentomutase from Dictyoglomus turgidum (strain DSM 6724 / Z-1310).